The sequence spans 434 residues: Tol-Pal system protein TolB (434 aa).

Positions 1 to 21 (MIVRRALALAALALAASPALA) are cleaved as a signal peptide. The disordered stretch occupies residues 411–434 (GDRQTPVTSGKTDLAAPAWGPLAP).

Belongs to the TolB family. The Tol-Pal system is composed of five core proteins: the inner membrane proteins TolA, TolQ and TolR, the periplasmic protein TolB and the outer membrane protein Pal. They form a network linking the inner and outer membranes and the peptidoglycan layer.

It is found in the periplasm. Functionally, part of the Tol-Pal system, which plays a role in outer membrane invagination during cell division and is important for maintaining outer membrane integrity. The sequence is that of Tol-Pal system protein TolB from Anaeromyxobacter dehalogenans (strain 2CP-C).